The chain runs to 384 residues: Cysteine desulfurase (384 aa).

Residues 74–75 (GT), Asn-154, Gln-180, and 200–202 (SGH) each bind pyridoxal 5'-phosphate. Residue Lys-203 is modified to N6-(pyridoxal phosphate)lysine. Position 238 (Thr-238) interacts with pyridoxal 5'-phosphate. Cys-325 functions as the Cysteine persulfide intermediate in the catalytic mechanism. Cys-325 contributes to the [2Fe-2S] cluster binding site.

It belongs to the class-V pyridoxal-phosphate-dependent aminotransferase family. NifS/IscS subfamily. Homodimer. Requires pyridoxal 5'-phosphate as cofactor.

The enzyme catalyses (sulfur carrier)-H + L-cysteine = (sulfur carrier)-SH + L-alanine. Its function is as follows. Catalyzes the removal of elemental sulfur atoms from cysteine to produce alanine. Seems to participate in the biosynthesis of the nitrogenase metalloclusters by providing the inorganic sulfur required for the Fe-S core formation. This chain is Cysteine desulfurase, found in Rhodobacter capsulatus (Rhodopseudomonas capsulata).